The chain runs to 493 residues: Ectonucleotide pyrophosphatase/phosphodiesterase 2 (493 aa).

Over 1–28 (MLLFEQPVDLEKNNEDDTNIKPFAISRH) the chain is Cytoplasmic. Residues 29 to 45 (FLLKLLLCGIILIELLL) form a helical; Signal-anchor for type II membrane protein membrane-spanning segment. Residues 46-493 (YSKCPKPIDN…KTKKEKSLLQ (448 aa)) lie on the Extracellular side of the membrane. N-linked (GlcNAc...) asparagine glycosylation is found at Asn-62, Asn-69, and Asn-112. Residues 76-438 (TLTILISIDG…IGIMGTHGYN (363 aa)) are phosphodiesterase. Catalysis depends on Thr-127, which acts as the Nucleophile. N-linked (GlcNAc...) asparagine glycans are attached at residues Asn-153 and Asn-441.

This sequence belongs to the nucleotide pyrophosphatase/phosphodiesterase family. Autophosphorylated as part of the catalytic cycle of phosphodiesterase/pyrophosphatase activity.

The protein localises to the membrane. It catalyses the reaction Hydrolytically removes 5'-nucleotides successively from the 3'-hydroxy termini of 3'-hydroxy-terminated oligonucleotides.. The enzyme catalyses a ribonucleoside 5'-triphosphate + H2O = a ribonucleoside 5'-phosphate + diphosphate + H(+). It carries out the reaction a 2'-deoxyribonucleoside 5'-triphosphate + H2O = a 2'-deoxyribonucleoside 5'-phosphate + diphosphate + H(+). Mediates extracellular nucleotide derived phosphate hydrolysis along with NPP1 and PHO5. This Saccharomyces cerevisiae (strain ATCC 204508 / S288c) (Baker's yeast) protein is Ectonucleotide pyrophosphatase/phosphodiesterase 2 (NPP2).